Reading from the N-terminus, the 223-residue chain is Kinetochore protein Spc25 (223 aa).

A coiled-coil region spans residues arginine 51–isoleucine 116.

This sequence belongs to the SPC25 family. As to quaternary structure, component of the Ndc80 complex, which is composed of Ndc80, Nuf2 and Spc25.

It is found in the nucleus. The protein localises to the chromosome. Its subcellular location is the centromere. The protein resides in the kinetochore. Its function is as follows. Acts as a component of the essential kinetochore-associated Ndc80 complex, which is required for chromosome segregation and spindle checkpoint activity during meiosis and mitosis. Required for kinetochore integrity and the organization of stable microtubule binding sites in the outer plate of the kinetochore. Participates in SAC signaling that responds specifically to disruptions in spindle microtubule dynamics. The NDC80 complex synergistically enhances the affinity of the SKA1 complex for microtubules and may allow the NDC80 complex to track depolymerizing microtubules. The protein is Kinetochore protein Spc25 of Drosophila yakuba (Fruit fly).